Reading from the N-terminus, the 92-residue chain is Auxin-responsive protein SAUR28 (92 aa).

This sequence belongs to the ARG7 family. Higher expression in thermo-responsive cultivars (e.g. cv. Alst-1, cv. Ang-0 and cv. Com-0) than in low thermo-responsive cultivars (e.g. cv. Dja-1, cv. El-0 and cv. Kon).

The protein localises to the cell membrane. In terms of biological role, functions as a positive effector of cell expansion through modulation of auxin transport. Involved in thermo-responsiveness of plant architecture. Enhances plasma membrane H(+)-ATPase. The polypeptide is Auxin-responsive protein SAUR28 (Arabidopsis thaliana (Mouse-ear cress)).